A 356-amino-acid polypeptide reads, in one-letter code: RuBisCO accumulation factor 1 (356 aa).

The segment at 9–192 (LSEEERQELL…RALIEALLLD (184 aa)) is N-terminal alpha-helix. A C-terminal beta-sheet region spans residues 216–342 (PRLLPFAGTL…LVLILRPKRV (127 aa)).

Belongs to the RAF family. In terms of assembly, homodimer. Forms an RbcL(8)-Raf1(8) complex. Forms complexes of many stoichiometries with RbcL with and without RbcS. RbcX and Raf1 can bind simultaneously to RbcL.

The protein localises to the cytoplasm. A major RuBisCO chaperone. Acts after GroEL-GroES chaperonin to fold and/or assemble the large subunit of RuBisCO (ccbL, rbcL). Cooperates with RbcX in RbcL folding, plays the major role in assembly of dimers into RbcL(8)-Raf1(8) intermediate complexes. RbcS replaces Raf1, leading to holoenzyme formation. In terms of biological role, the Raf1 dimer brackets an RbcL dimer, leading to RbcL(8)-Raf1(8) complex formation. RbcS displaces Raf1, resulting in holoenzyme formation. Probably plays a role in early carboxysome assembly; in its absence CcaA, CcmM, CcmN, RbcL and RbcS colocalize in small patches while the shell proteins CcmK2, CcmK3 and CcmK4 are found diffused in the cytoplasm. Its function is as follows. It has been suggested that Raf1 and RbcX are partially functionally redundant. Other evidence suggests they are antagonistic in mediating RuBisCO assembly. The chain is RuBisCO accumulation factor 1 from Synechococcus elongatus (strain ATCC 33912 / PCC 7942 / FACHB-805) (Anacystis nidulans R2).